The following is a 204-amino-acid chain: MDFYGRREQYGGYGGYGGGGALATPGYAPAAPYGMSQVNIEGNGCGRTLPPQPTVKVYCRANPNYAMTARNGAVVLAPANPKDEYQHWIKDMRWSTSIKDEEGYPAFALVNKATGQAIKHSLGQSHPVRLVPYNPEVMDESVLWTESRDVGNGFRCIRMVNNIYLNFDAFHGDKYHGGVRDGTDIVLWKWCEGDNQRWKIQPYY.

Residues 54-200 (TVKVYCRANP…CEGDNQRWKI (147 aa)) enclose the Ricin B-type lectin domain.

Expressed in shoots and lamina.

Lectin which binds carbohydrates in vitro. Interacts through its lectin domain with glycan structures containing specific motifs. This chain is Ricin B-like lectin R40G3, found in Oryza sativa subsp. japonica (Rice).